A 188-amino-acid chain; its full sequence is Peptidyl-tRNA hydrolase (188 aa).

Position 15 (Phe15) interacts with tRNA. The active-site Proton acceptor is His20. TRNA is bound by residues Tyr64, Asn66, and Asn112.

This sequence belongs to the PTH family. As to quaternary structure, monomer.

It is found in the cytoplasm. It carries out the reaction an N-acyl-L-alpha-aminoacyl-tRNA + H2O = an N-acyl-L-amino acid + a tRNA + H(+). Functionally, hydrolyzes ribosome-free peptidyl-tRNAs (with 1 or more amino acids incorporated), which drop off the ribosome during protein synthesis, or as a result of ribosome stalling. In terms of biological role, catalyzes the release of premature peptidyl moieties from peptidyl-tRNA molecules trapped in stalled 50S ribosomal subunits, and thus maintains levels of free tRNAs and 50S ribosomes. This Borreliella afzelii (strain PKo) (Borrelia afzelii) protein is Peptidyl-tRNA hydrolase.